The chain runs to 769 residues: DNA gyrase subunit B (769 aa).

The Toprim domain maps to 414-528; that stretch reads SEIYLVEGDS…NGHIYLAQPP (115 aa). Mg(2+)-binding residues include E420, D493, and D495.

The protein belongs to the type II topoisomerase GyrB family. In terms of assembly, heterotetramer, composed of two GyrA and two GyrB chains. In the heterotetramer, GyrA contains the active site tyrosine that forms a transient covalent intermediate with DNA, while GyrB binds cofactors and catalyzes ATP hydrolysis. Requires Mg(2+) as cofactor. Mn(2+) is required as a cofactor. It depends on Ca(2+) as a cofactor.

The protein resides in the cytoplasm. The enzyme catalyses ATP-dependent breakage, passage and rejoining of double-stranded DNA.. In terms of biological role, a type II topoisomerase that negatively supercoils closed circular double-stranded (ds) DNA in an ATP-dependent manner to modulate DNA topology and maintain chromosomes in an underwound state. Negative supercoiling favors strand separation, and DNA replication, transcription, recombination and repair, all of which involve strand separation. Also able to catalyze the interconversion of other topological isomers of dsDNA rings, including catenanes and knotted rings. Type II topoisomerases break and join 2 DNA strands simultaneously in an ATP-dependent manner. The protein is DNA gyrase subunit B of Campylobacter jejuni subsp. jejuni serotype O:2 (strain ATCC 700819 / NCTC 11168).